We begin with the raw amino-acid sequence, 661 residues long: Transketolase (661 aa).

Residue H30 coordinates substrate. Thiamine diphosphate is bound by residues H70 and G118–L120. Residues S99–G118 form a disordered region. D159 is a Mg(2+) binding site. The thiamine diphosphate site is built by G160 and N189. 2 residues coordinate Mg(2+): N189 and V191. 3 residues coordinate substrate: H266, R357, and S384. H266 contributes to the thiamine diphosphate binding site. E411 serves as the catalytic Proton donor. Position 437 (F437) interacts with thiamine diphosphate. H461, D469, and R520 together coordinate substrate.

This sequence belongs to the transketolase family. Homodimer. Mg(2+) is required as a cofactor. Ca(2+) serves as cofactor. It depends on Mn(2+) as a cofactor. Requires Co(2+) as cofactor. The cofactor is thiamine diphosphate.

The enzyme catalyses D-sedoheptulose 7-phosphate + D-glyceraldehyde 3-phosphate = aldehydo-D-ribose 5-phosphate + D-xylulose 5-phosphate. In terms of biological role, catalyzes the transfer of a two-carbon ketol group from a ketose donor to an aldose acceptor, via a covalent intermediate with the cofactor thiamine pyrophosphate. This Physarum polycephalum (Slime mold) protein is Transketolase (tkt).